The following is a 156-amino-acid chain: Small ribosomal subunit protein uS7 (156 aa).

It belongs to the universal ribosomal protein uS7 family. As to quaternary structure, part of the 30S ribosomal subunit. Contacts proteins S9 and S11.

In terms of biological role, one of the primary rRNA binding proteins, it binds directly to 16S rRNA where it nucleates assembly of the head domain of the 30S subunit. Is located at the subunit interface close to the decoding center, probably blocks exit of the E-site tRNA. The polypeptide is Small ribosomal subunit protein uS7 (Mycobacterium avium (strain 104)).